We begin with the raw amino-acid sequence, 1088 residues long: DNA damage-binding protein 1a (1088 aa).

This sequence belongs to the DDB1 family. Component of the CDD complex, at least composed of COP10, DET1 and DDB1A. Component of the CUL4-RBX1-CDD complex. Component of the CUL4-RBX1-DDB1-PRL1 E3 ubiquitin-protein ligase complex. Component of the UV-DDB complex, which is composed of DDB1A and DDB2. Interacts with RAE1. Interacts with WDR55. Interacts with ATCSA-1. Interacts with DDA1. Binds to ASG2; the subcellular localization of this complex depends on ASG2 farnesylation status. Binds to KTN80.2/DWA3. Interacts with HTD1. Interacts directly with DHU1.

The protein localises to the cytoplasm. It localises to the nucleus. It participates in protein modification; protein ubiquitination. In terms of biological role, component of light signal transduction machinery. Involved in repression of photomorphogenesis in darkness by participating in the CDD complex, a complex probably required to regulate the activity of ubiquitin conjugating enzymes (E2s). Repression of photomorphogenesis is probably mediated by ubiquitination and subsequent degradation of photomorphogenesis-promoting factors such as HY5, HYH and LAF1. Plays a role in DNA repair by forming with DDB2 the UV-damaged DNA-binding protein complex (UV-DDB). Component of the CUL4-RBX1-DDB1-PRL1 E3 ubiquitin-protein ligase complex. The protein is DNA damage-binding protein 1a of Arabidopsis thaliana (Mouse-ear cress).